A 586-amino-acid chain; its full sequence is DNA-directed RNA polymerase subunit beta' (586 aa).

C64, C66, C85, and C88 together coordinate Zn(2+). Residues D448, D450, and D452 each coordinate Mg(2+).

Belongs to the RNA polymerase beta' chain family. RpoC1 subfamily. In terms of assembly, in plastids the minimal PEP RNA polymerase catalytic core is composed of four subunits: alpha, beta, beta', and beta''. When a (nuclear-encoded) sigma factor is associated with the core the holoenzyme is formed, which can initiate transcription. It depends on Mg(2+) as a cofactor. The cofactor is Zn(2+).

Its subcellular location is the plastid. It is found in the chloroplast. The catalysed reaction is RNA(n) + a ribonucleoside 5'-triphosphate = RNA(n+1) + diphosphate. In terms of biological role, DNA-dependent RNA polymerase catalyzes the transcription of DNA into RNA using the four ribonucleoside triphosphates as substrates. The polypeptide is DNA-directed RNA polymerase subunit beta' (Euglena gracilis).